Consider the following 310-residue polypeptide: uncharacterized protein (310 aa).

This sequence belongs to the YiaX1 family.

This is an uncharacterized protein from Salmonella typhimurium (strain LT2 / SGSC1412 / ATCC 700720).